A 425-amino-acid chain; its full sequence is Serine--tRNA ligase (425 aa).

L-serine is bound at residue 229-231; the sequence is TSE. ATP is bound by residues 259-261 and Val275; that span reads RKE. An L-serine-binding site is contributed by Glu282. 349–352 provides a ligand contact to ATP; that stretch reads EVTS. Thr384 contributes to the L-serine binding site.

This sequence belongs to the class-II aminoacyl-tRNA synthetase family. Type-1 seryl-tRNA synthetase subfamily. As to quaternary structure, homodimer. The tRNA molecule binds across the dimer.

It is found in the cytoplasm. It carries out the reaction tRNA(Ser) + L-serine + ATP = L-seryl-tRNA(Ser) + AMP + diphosphate + H(+). The catalysed reaction is tRNA(Sec) + L-serine + ATP = L-seryl-tRNA(Sec) + AMP + diphosphate + H(+). It participates in aminoacyl-tRNA biosynthesis; selenocysteinyl-tRNA(Sec) biosynthesis; L-seryl-tRNA(Sec) from L-serine and tRNA(Sec): step 1/1. Catalyzes the attachment of serine to tRNA(Ser). Is also able to aminoacylate tRNA(Sec) with serine, to form the misacylated tRNA L-seryl-tRNA(Sec), which will be further converted into selenocysteinyl-tRNA(Sec). The chain is Serine--tRNA ligase from Borreliella burgdorferi (strain ATCC 35210 / DSM 4680 / CIP 102532 / B31) (Borrelia burgdorferi).